Consider the following 20-residue polypeptide: GLTQKDLVALSGAHTIGKAR.

His-14 serves as a coordination point for heme. Residue Thr-15 coordinates Ca(2+).

This sequence belongs to the peroxidase family. Classical plant (class III) peroxidase subfamily. Ca(2+) is required as a cofactor. It depends on heme b as a cofactor.

The protein resides in the secreted. The enzyme catalyses 2 a phenolic donor + H2O2 = 2 a phenolic radical donor + 2 H2O. Functionally, removal of H(2)O(2), oxidation of toxic reductants, biosynthesis and degradation of lignin, suberization, auxin catabolism, response to environmental stresses such as wounding, pathogen attack and oxidative stress. These functions might be dependent on each isozyme/isoform in each plant tissue. The protein is Peroxidase 1 of Betula pendula (European white birch).